Consider the following 194-residue polypeptide: ATP-dependent Clp protease proteolytic subunit 3 (194 aa).

Serine 96 (nucleophile) is an active-site residue. The active site involves histidine 121.

The protein belongs to the peptidase S14 family. In terms of assembly, fourteen ClpP subunits assemble into 2 heptameric rings which stack back to back to give a disk-like structure with a central cavity, resembling the structure of eukaryotic proteasomes.

Its subcellular location is the cytoplasm. It carries out the reaction Hydrolysis of proteins to small peptides in the presence of ATP and magnesium. alpha-casein is the usual test substrate. In the absence of ATP, only oligopeptides shorter than five residues are hydrolyzed (such as succinyl-Leu-Tyr-|-NHMec, and Leu-Tyr-Leu-|-Tyr-Trp, in which cleavage of the -Tyr-|-Leu- and -Tyr-|-Trp bonds also occurs).. Its function is as follows. Cleaves peptides in various proteins in a process that requires ATP hydrolysis. Has a chymotrypsin-like activity. Plays a major role in the degradation of misfolded proteins. This Rhizobium etli (strain ATCC 51251 / DSM 11541 / JCM 21823 / NBRC 15573 / CFN 42) protein is ATP-dependent Clp protease proteolytic subunit 3.